A 2537-amino-acid chain; its full sequence is Histone-lysine N-methyltransferase SETD2 (2537 aa).

Residues 1 to 12 are compositionally biased toward pro residues; sequence MKPLPSQQPPPK. Disordered stretches follow at residues 1–31, 91–142, 156–483, 510–554, and 607–629; these read MKPLPSQQPPPKMGDFYDPEHPTPEEEENEA, TALS…ELGR, PQLA…RDLR, YTSK…STSR, and SEREKTGSPTPSNQLNDSPTFKK. The span at 18–31 shows a compositional bias: basic and acidic residues; the sequence is DPEHPTPEEEENEA. Polar residues predominate over residues 91–103; it reads TALSNEKQSDSPN. Ser-132 carries the phosphoserine modification. Residues 156–166 show a composition bias toward low complexity; the sequence is PQLAASTTAAS. Residues 187–205 are compositionally biased toward pro residues; the sequence is PSSPPPPPPPPQASSPSPP. Position 242 is a phosphoserine (Ser-242). Positions 264-291 are enriched in basic and acidic residues; that stretch reads LEEHTVQTLKEQADHLLQKEDSHIGKEE. Residues Ser-322, Ser-324, and Ser-345 each carry the phosphoserine modification. Composition is skewed to basic and acidic residues over residues 336–401, 422–433, 440–468, and 510–528; these read RSHD…ERDR, RSERSHYYDSER, PYRERTRYSRPYTDNRARESSDSEDEYKK, and YTSKLERESKRTSEHETIK. Residue Lys-360 forms a Glycyl lysine isopeptide (Lys-Gly) (interchain with G-Cter in SUMO2) linkage. Residue Ser-423 is modified to Phosphoserine. Residues Ser-532, Ser-614, and Ser-624 each carry the phosphoserine modification. The span at 613–625 shows a compositional bias: polar residues; that stretch reads GSPTPSNQLNDSP. A Phosphothreonine modification is found at Thr-626. Position 633 is a phosphoserine (Ser-633). Lys-637 participates in a covalent cross-link: Glycyl lysine isopeptide (Lys-Gly) (interchain with G-Cter in SUMO2). Residues Ser-697, Ser-707, Ser-743, and Ser-753 each carry the phosphoserine modification. The tract at residues 729 to 749 is disordered; it reads RDSDDTCRQHNTSKSPFREME. Lys-775 is covalently cross-linked (Glycyl lysine isopeptide (Lys-Gly) (interchain with G-Cter in SUMO2)). 4 disordered regions span residues 829–894, 941–974, 1015–1078, and 1135–1185; these read CDNR…PTLD, QEAQEEGNSILHERRGRPEIPLDEEQRGHTHISD, EDYS…HYSD, and AHAQ…EDLP. Residues 830-847 show a composition bias toward basic and acidic residues; that stretch reads DNREPTDRHSENTCDEYK. Over residues 849-858 the composition is skewed to polar residues; that stretch reads SIGSTSSASH. Over residues 867–883 the composition is skewed to low complexity; sequence PIGSSGISSLQSPPSGI. Basic and acidic residues predominate over residues 951–974; sequence LHERRGRPEIPLDEEQRGHTHISD. Residues 1026 to 1037 show a composition bias toward acidic residues; it reads DESDSEDTESDD. Ser-1077 is modified (phosphoserine). The segment covering 1150 to 1165 has biased composition (basic and acidic residues); that stretch reads SRSDHLGHLNPEDTLR. Ser-1201 bears the Phosphoserine mark. Disordered regions lie at residues 1232-1254, 1280-1346, and 1366-1396; these read GWDFSQQERPTTTYQQPDSSYGT, WDPR…APEI, and NFEKNDIKERGPPKKRRQELESDSESDGELQ. 2 stretches are compositionally biased toward polar residues: residues 1235 to 1254 and 1319 to 1329; these read FSQQERPTTTYQQPDSSYGT and RSGSHFSSPSN. The span at 1366–1377 shows a compositional bias: basic and acidic residues; sequence NFEKNDIKERGP. A phosphoserine mark is found at Ser-1387, Ser-1389, and Ser-1391. The interval 1392–1688 is interaction with TUBA1A; it reads DGELQARKKV…KKERSRKKDS (297 aa). The AWS domain occupies 1468–1522; sequence IKRMQCECTPLSKDERAQGEVACGEDCLNRLLMIECSSRCPNGDYCSNRRFQRKQ. Zn(2+) is bound by residues Cys-1473, Cys-1475, Cys-1490, Cys-1494, Cys-1503, Cys-1507, and Cys-1513. The SET domain maps to 1524–1641; the sequence is ADVEVILTEK…SGSELTFDYQ (118 aa). Residues 1534-1536, 1577-1579, and 1602-1603 each bind S-adenosyl-L-methionine; these read KGW, HYY, and NH. Cys-1605 contributes to the Zn(2+) binding site. A Post-SET domain is found at 1648-1664; the sequence is EAQKCFCGSANCRGYLG. S-adenosyl-L-methionine is bound at residue Gln-1650. Cys-1652 is a binding site for Zn(2+). Phe-1653 is a binding site for S-adenosyl-L-methionine. Zn(2+)-binding residues include Cys-1654 and Cys-1659. Phosphoserine occurs at positions 1670, 1818, and 1819. Positions 1806–1848 are disordered; that stretch reads TAVPQLSEGDGYSSENTSRAHTPLNTPDPSAKPSTEMDTDTPK. The segment covering 1818–1833 has biased composition (polar residues); sequence SSENTSRAHTPLNTPD. Residues Thr-1827 and Thr-1846 each carry the phosphothreonine modification. A phosphoserine mark is found at Ser-1862 and Ser-1926. Disordered regions lie at residues 1914–1981 and 1993–2110; these read SEAT…DISD and LKEV…AQKQ. Residues 1934–1946 show a composition bias toward basic and acidic residues; the sequence is TEPKDSNGTKLEE. The span at 1947–1964 shows a compositional bias: acidic residues; it reads TIAEETPSQDEEEGVSDV. Residues Ser-1954, Ser-1962, and Ser-1969 each carry the phosphoserine modification. 3 stretches are compositionally biased toward basic and acidic residues: residues 1965–1978, 1993–2020, and 2032–2045; these read ESERSQEPPDKTVD, LKEVYRIPKKSQTEKESTVAERGRDAAA, and RSRERDPDKQSQNK. Ser-2053 and Ser-2055 each carry phosphoserine. Composition is skewed to basic and acidic residues over residues 2063–2073 and 2084–2108; these read RGTKRPDDRYD and KDRNKLSTEERRKLFEQEVAQREAQ. The stretch at 2090 to 2119 forms a coiled coil; it reads STEERRKLFEQEVAQREAQKQQQQMQNLGM. A low charge region region spans residues 2110–2339; that stretch reads QQQQMQNLGM…APGQPQSLQP (230 aa). Positions 2362 to 2395 constitute a WW domain; the sequence is IVLPPNWKTARDPEGKIYYYHVITRQTQWDPPTW. Residues 2412-2438 form a disordered region; that stretch reads LGTPTYDENPMKTSKKPKTAEADTSSE. An interaction with POLR2A region spans residues 2430–2537; sequence TAEADTSSEL…YKPKEDTELE (108 aa).

The protein belongs to the class V-like SAM-binding methyltransferase superfamily. Histone-lysine methyltransferase family. SET2 subfamily. As to quaternary structure, specifically interacts with hyperphosphorylated C-terminal domain (CTD) of RNA polymerase II large subunit (POLR2A): binds to CTD heptad repeats doubly phosphorylated on 'Ser-2' and 'Ser-5' of each heptad. Interacts with HTT. Interacts with IWS1. Interacts with p53/TP53; leading to regulate p53/TP53 target genes. Component of a complex with HNRNPL. Interacts with TUBA1A; the interaction is independent on alpha-tubulin acetylation on 'Lys-40'. Post-translationally, may be automethylated.

It is found in the nucleus. It localises to the chromosome. The catalysed reaction is L-lysyl(36)-[histone H3] + 3 S-adenosyl-L-methionine = N(6),N(6),N(6)-trimethyl-L-lysyl(36)-[histone H3] + 3 S-adenosyl-L-homocysteine + 3 H(+). The enzyme catalyses L-lysyl-[protein] + S-adenosyl-L-methionine = N(6)-methyl-L-lysyl-[protein] + S-adenosyl-L-homocysteine + H(+). It catalyses the reaction L-lysyl-[protein] + 3 S-adenosyl-L-methionine = N(6),N(6),N(6)-trimethyl-L-lysyl-[protein] + 3 S-adenosyl-L-homocysteine + 3 H(+). Specifically inhibited by sinefungin derivatives. Its function is as follows. Histone methyltransferase that specifically trimethylates 'Lys-36' of histone H3 (H3K36me3) using dimethylated 'Lys-36' (H3K36me2) as substrate. It is capable of trimethylating unmethylated H3K36 (H3K36me0) in vitro. Represents the main enzyme generating H3K36me3, a specific tag for epigenetic transcriptional activation. Plays a role in chromatin structure modulation during elongation by coordinating recruitment of the FACT complex and by interacting with hyperphosphorylated POLR2A. Acts as a key regulator of DNA mismatch repair in G1 and early S phase by generating H3K36me3, a mark required to recruit MSH6 subunit of the MutS alpha complex: early recruitment of the MutS alpha complex to chromatin to be replicated allows a quick identification of mismatch DNA to initiate the mismatch repair reaction. Required for DNA double-strand break repair in response to DNA damage: acts by mediating formation of H3K36me3, promoting recruitment of RAD51 and DNA repair via homologous recombination (HR). Acts as a tumor suppressor. H3K36me3 also plays an essential role in the maintenance of a heterochromatic state, by recruiting DNA methyltransferase DNMT3A. H3K36me3 is also enhanced in intron-containing genes, suggesting that SETD2 recruitment is enhanced by splicing and that splicing is coupled to recruitment of elongating RNA polymerase. Required during angiogenesis. Required for endoderm development by promoting embryonic stem cell differentiation toward endoderm: acts by mediating formation of H3K36me3 in distal promoter regions of FGFR3, leading to regulate transcription initiation of FGFR3. In addition to histones, also mediates methylation of other proteins, such as tubulins and STAT1. Trimethylates 'Lys-40' of alpha-tubulins such as TUBA1B (alpha-TubK40me3); alpha-TubK40me3 is required for normal mitosis and cytokinesis and may be a specific tag in cytoskeletal remodeling. Involved in interferon-alpha-induced antiviral defense by mediating both monomethylation of STAT1 at 'Lys-525' and catalyzing H3K36me3 on promoters of some interferon-stimulated genes (ISGs) to activate gene transcription. The chain is Histone-lysine N-methyltransferase SETD2 from Mus musculus (Mouse).